Consider the following 1068-residue polypeptide: Self-sufficient cytochrome P450 monooxygenase CYP505U2 (1068 aa).

Cysteine 408 provides a ligand contact to heme. The disordered stretch occupies residues 464–498 (TTAGMVPESVQSLRQAQKSGKPGNSKSSANESMVG). A compositionally biased stretch (polar residues) spans 472–498 (SVQSLRQAQKSGKPGNSKSSANESMVG). One can recognise a Flavodoxin-like domain in the interval 505 to 646 (VSIFYGSNSG…DLEKWEESIL (142 aa)). FMN is bound by residues 511–515 (SNSGS) and 590–622 (VFGC…QRVA). Positions 679–909 (KEFLEATVTS…RRSNPAFHPP (231 aa)) constitute an FAD-binding FR-type domain.

The protein in the N-terminal section; belongs to the cytochrome P450 family. The cofactor is FAD. Requires FMN as cofactor. Heme serves as cofactor.

The enzyme catalyses 2 oxidized [cytochrome P450] + NADPH = 2 reduced [cytochrome P450] + NADP(+) + H(+). It carries out the reaction an organic molecule + reduced [NADPH--hemoprotein reductase] + O2 = an alcohol + oxidized [NADPH--hemoprotein reductase] + H2O + H(+). It catalyses the reaction dodecanoate + reduced [NADPH--hemoprotein reductase] + O2 = 3-hydroxydodecanoate + oxidized [NADPH--hemoprotein reductase] + H2O + H(+). The catalysed reaction is dodecanoate + reduced [NADPH--hemoprotein reductase] + O2 = 7-hydroxydodecanoate + oxidized [NADPH--hemoprotein reductase] + H2O + H(+). The enzyme catalyses dodecan-1-ol + reduced [NADPH--hemoprotein reductase] + O2 = 1,4-dodecanediol + oxidized [NADPH--hemoprotein reductase] + H2O + H(+). It carries out the reaction dodecan-1-ol + reduced [NADPH--hemoprotein reductase] + O2 = 1,3-dodecanediol + oxidized [NADPH--hemoprotein reductase] + H2O + H(+). In terms of biological role, self-sufficient cytochrome P450 monooxygenase that catalyzes the regioselective in-chain hydroxylation of alkanes, fatty alcohols, and fatty acids. Preferentially hydroxylates 1-dodecanol at C3 and C4 (positions omega-8 and omega-9). It is very likely that CYP505U2 prefers dodecanol, and probably other fatty alcohols, over fatty acids as substrates. Does not show any significant activity toward tetradecanoic acid. The polypeptide is Self-sufficient cytochrome P450 monooxygenase CYP505U2 (Exserohilum turcicum (strain 28A) (Northern leaf blight fungus)).